Reading from the N-terminus, the 118-residue chain is MARIAGVNIPDNKHTVISLTYIYGVGRTTAQNICAATGVNPAAKIKDLSDEQIDQLRNEVAKHTTEGDLRREINMNIKRLMDLGCYRGLRHRRGLPVRGQRTKTNARTRKGPRKPIRK.

A disordered region spans residues 93-118 (RGLPVRGQRTKTNARTRKGPRKPIRK).

The protein belongs to the universal ribosomal protein uS13 family. In terms of assembly, part of the 30S ribosomal subunit. Forms a loose heterodimer with protein S19. Forms two bridges to the 50S subunit in the 70S ribosome.

Its function is as follows. Located at the top of the head of the 30S subunit, it contacts several helices of the 16S rRNA. In the 70S ribosome it contacts the 23S rRNA (bridge B1a) and protein L5 of the 50S subunit (bridge B1b), connecting the 2 subunits; these bridges are implicated in subunit movement. Contacts the tRNAs in the A and P-sites. The sequence is that of Small ribosomal subunit protein uS13 from Pseudomonas paraeruginosa (strain DSM 24068 / PA7) (Pseudomonas aeruginosa (strain PA7)).